A 390-amino-acid chain; its full sequence is Na(+)/H(+) antiporter NhaA 1 (390 aa).

The next 11 helical transmembrane spans lie at 14 to 34, 59 to 79, 94 to 114, 125 to 145, 154 to 174, 179 to 199, 205 to 225, 260 to 280, 295 to 315, 328 to 348, and 362 to 382; these read SGIL…NGVL, TILW…GLEL, VALP…IFYV, GWAI…FLLG, LFLL…IAIF, LSII…ILNY, IYIY…SGIH, PIVA…VVFS, IIFG…FLAI, WLHL…SLFI, and ANKI…YFVL.

Belongs to the NhaA Na(+)/H(+) (TC 2.A.33) antiporter family.

Its subcellular location is the cell inner membrane. The catalysed reaction is Na(+)(in) + 2 H(+)(out) = Na(+)(out) + 2 H(+)(in). Functionally, na(+)/H(+) antiporter that extrudes sodium in exchange for external protons. This is Na(+)/H(+) antiporter NhaA 1 from Campylobacter fetus subsp. fetus (strain 82-40).